A 122-amino-acid polypeptide reads, in one-letter code: Large ribosomal subunit protein uL14 (122 aa).

The protein belongs to the universal ribosomal protein uL14 family. As to quaternary structure, part of the 50S ribosomal subunit. Forms a cluster with proteins L3 and L19. In the 70S ribosome, L14 and L19 interact and together make contacts with the 16S rRNA in bridges B5 and B8.

Its function is as follows. Binds to 23S rRNA. Forms part of two intersubunit bridges in the 70S ribosome. The sequence is that of Large ribosomal subunit protein uL14 from Mycoplasmopsis pulmonis (strain UAB CTIP) (Mycoplasma pulmonis).